The following is a 1184-amino-acid chain: Nucleolar protein 6 (1184 aa).

Positions 1–10 (MGRIKEKESK) are enriched in basic and acidic residues. Disordered stretches follow at residues 1–42 (MGRI…NRVP) and 1133–1184 (REQR…NALC).

It belongs to the NRAP family. As to quaternary structure, part of the small subunit (SSU) processome, composed of more than 70 proteins and the RNA chaperone small nucleolar RNA (snoRNA) U3.

It localises to the nucleus. The protein localises to the nucleolus. It is found in the chromosome. Functionally, part of the small subunit (SSU) processome, first precursor of the small eukaryotic ribosomal subunit. During the assembly of the SSU processome in the nucleolus, many ribosome biogenesis factors, an RNA chaperone and ribosomal proteins associate with the nascent pre-rRNA and work in concert to generate RNA folding, modifications, rearrangements and cleavage as well as targeted degradation of pre-ribosomal RNA by the RNA exosome. This Drosophila virilis (Fruit fly) protein is Nucleolar protein 6.